The sequence spans 388 residues: Ras-related protein Rab-26 (388 aa).

The interval 1–115 (MASTAVGLGG…HHHSQLSLTG (115 aa)) is disordered. Over residues 7 to 21 (GLGGGEGDPGAGGPP) the composition is skewed to gly residues. A compositionally biased stretch (basic and acidic residues) spans 47–56 (RIEELRRRPF). The segment covering 67–86 (PASVSASITTTTTQQQQQHH) has biased composition (low complexity). Positions 87–109 (NPSHHHQSSHHQPSHHHHHHHHS) are enriched in basic residues. 197–204 (GDSGVGKT) serves as a coordination point for GTP. Positions 219 to 228 (SFSATVGIAL) match the Effector region motif. GTP is bound by residues 246–250 (DTAGQ) and 304–307 (NKAD). Cysteine 382 carries the S-palmitoyl cysteine lipid modification. Cysteine 385 is subject to Cysteine methyl ester. Cysteine 385 is lipidated: S-geranylgeranyl cysteine. Positions 386 to 388 (RNM) are cleaved as a propeptide — removed in mature form.

It belongs to the small GTPase superfamily. Rab family.

It is found in the cell membrane. In terms of biological role, participates in exocrine secretion. In Drosophila melanogaster (Fruit fly), this protein is Ras-related protein Rab-26.